Consider the following 356-residue polypeptide: tRNA N6-adenosine threonylcarbamoyltransferase (356 aa).

Fe cation-binding residues include H115 and H119. Substrate-binding positions include 138-142, D171, G184, and N283; that span reads LVSGG. D311 serves as a coordination point for Fe cation.

The protein belongs to the KAE1 / TsaD family. Fe(2+) is required as a cofactor.

It is found in the cytoplasm. It carries out the reaction L-threonylcarbamoyladenylate + adenosine(37) in tRNA = N(6)-L-threonylcarbamoyladenosine(37) in tRNA + AMP + H(+). Functionally, required for the formation of a threonylcarbamoyl group on adenosine at position 37 (t(6)A37) in tRNAs that read codons beginning with adenine. Is involved in the transfer of the threonylcarbamoyl moiety of threonylcarbamoyl-AMP (TC-AMP) to the N6 group of A37, together with TsaE and TsaB. TsaD likely plays a direct catalytic role in this reaction. The chain is tRNA N6-adenosine threonylcarbamoyltransferase from Prochlorococcus marinus (strain SARG / CCMP1375 / SS120).